Here is a 306-residue protein sequence, read N- to C-terminus: Shugoshin (306 aa).

Residues 28–75 adopt a coiled-coil conformation; it reads NFKSTNESLIKKNLQLKQQLSQCTKALEKLRNENIALREQNQELIDAT. 2 disordered regions span residues 122 to 196 and 223 to 306; these read PEPS…GRRS and IAPS…DTFF. Residues 133–161 show a composition bias toward basic and acidic residues; sequence PKMECNLEKLDESPVRNFPRSDYEEENKS. The segment covering 167–181 has biased composition (polar residues); that stretch reads NGPSSSSSMTQNLEN. Over residues 230-241 the composition is skewed to pro residues; the sequence is GGPPKKAPPRKA.

It belongs to the shugoshin family.

The protein localises to the nucleus. The protein resides in the chromosome. It is found in the centromere. Functionally, plays a central role in chromosome cohesion during cell division by preventing premature dissociation of cohesin complex from centromeres after prophase, when most of cohesin complex dissociates from chromosomes arms. In Caenorhabditis briggsae, this protein is Shugoshin (sgo-1).